Consider the following 418-residue polypeptide: Serine protease inhibitor A3M (418 aa).

The signal sequence occupies residues 1–20 (MAFIAALGILMAGICPTVLC). Asn-104, Asn-184, and Asn-269 each carry an N-linked (GlcNAc...) asparagine glycan. The interval 367–392 (GTEAAAATGFIFGFRSRRLQTMTVQF) is RCL.

Belongs to the serpin family. As to expression, expressed in liver and testis.

Its subcellular location is the secreted. This chain is Serine protease inhibitor A3M (Serpina3m), found in Mus musculus (Mouse).